Consider the following 466-residue polypeptide: Argininosuccinate lyase (466 aa).

The protein belongs to the lyase 1 family. Argininosuccinate lyase subfamily.

It is found in the cytoplasm. It catalyses the reaction 2-(N(omega)-L-arginino)succinate = fumarate + L-arginine. Its pathway is amino-acid biosynthesis; L-arginine biosynthesis; L-arginine from L-ornithine and carbamoyl phosphate: step 3/3. This is Argininosuccinate lyase from Brucella anthropi (strain ATCC 49188 / DSM 6882 / CCUG 24695 / JCM 21032 / LMG 3331 / NBRC 15819 / NCTC 12168 / Alc 37) (Ochrobactrum anthropi).